The chain runs to 843 residues: Neuroligin-1 (843 aa).

Positions Met-1–Ser-45 are cleaved as a signal peptide. Residues Gln-46–Ser-697 lie on the Extracellular side of the membrane. Asn-109 carries an N-linked (GlcNAc...) (complex) asparagine glycan. 2 disulfide bridges follow: Cys-117–Cys-153 and Cys-172–Cys-181. N-linked (GlcNAc...) (complex) asparagine glycans are attached at residues Asn-303 and Asn-343. Intrachain disulfides connect Cys-342–Cys-353 and Cys-512–Cys-546. The N-linked (GlcNAc...) asparagine glycan is linked to Asn-547. A disordered region spans residues Thr-647 to Asp-688. The segment covering Lys-661 to Phe-670 has biased composition (polar residues). O-linked (GalNAc...) serine glycosylation is found at Ser-683 and Ser-686. Residues Val-698–Tyr-718 form a helical membrane-spanning segment. The Cytoplasmic segment spans residues Tyr-719–Val-843. The segment at Gly-822–Val-843 is disordered. Basic residues predominate over residues Pro-831–Val-843.

This sequence belongs to the type-B carboxylesterase/lipase family. As to quaternary structure, interacts with neurexins NRXN1, NRXN2 and NRXN3. Interaction with neurexins is mediated by heparan sulfate glycan modification on neurexin. Interacts with NLGN3. Interacts (via its C-terminus) with DLG4/PSD-95 (via PDZ domain 3). Interacts with GOPC. Interacts with AIP1 and PDZRN3. Post-translationally, the N-terminus is blocked. In terms of tissue distribution, expressed in brain, almost exclusively in neurons, and spinal cord. Detected in pancreas islet beta cells.

It is found in the cell membrane. Its subcellular location is the postsynaptic density. The protein resides in the synaptic cleft. The protein localises to the synaptic cell membrane. Cell surface protein involved in cell-cell-interactions via its interactions with neurexin family members. Plays a role in synapse function and synaptic signal transmission, and probably mediates its effects by recruiting and clustering other synaptic proteins. May promote the initial formation of synapses, but is not essential for this. In vitro, triggers the de novo formation of presynaptic structures. May be involved in specification of excitatory synapses. Required to maintain wakefulness quality and normal synchrony of cerebral cortex activity during wakefulness and sleep. The protein is involved in nervous system development. In Rattus norvegicus (Rat), this protein is Neuroligin-1 (Nlgn1).